The chain runs to 180 residues: Small ribosomal subunit protein uS5 (180 aa).

An S5 DRBM domain is found at 24–87 (MIEKLVAVNR…EQARKNLVSV (64 aa)).

Belongs to the universal ribosomal protein uS5 family. Part of the 30S ribosomal subunit. Contacts proteins S4 and S8.

With S4 and S12 plays an important role in translational accuracy. Functionally, located at the back of the 30S subunit body where it stabilizes the conformation of the head with respect to the body. This is Small ribosomal subunit protein uS5 from Stenotrophomonas maltophilia (strain R551-3).